The chain runs to 557 residues: Glypican-1 (557 aa).

A signal peptide spans 1 to 23 (MELRTRGWWLLCAAAALVVCARG). 7 disulfides stabilise this stretch: Cys32/Cys68, Cys62/Cys255, Cys69/Cys258, Cys190/Cys342, Cys245/Cys278, Cys267/Cys414, and Cys271/Cys400. Asn79 and Asn116 each carry an N-linked (GlcNAc...) asparagine glycan. The segment at 477-531 (FQDASDDGSGSGSGGGCPDDTCGRRVSKKSSSSRTPLTHALPGLSEQEGQKTSAA) is disordered. O-linked (Xyl...) (heparan sulfate) serine glycans are attached at residues Ser485, Ser487, and Ser489. Ser529 carries the GPI-anchor amidated serine lipid modification. The propeptide at 530-557 (AATCPEPHSFFLLFLVTLVLAAARPRWR) is removed in mature form.

Belongs to the glypican family. In terms of processing, S-nitrosylated in a Cu(2+)-dependent manner. Nitric acid (NO) is released from the nitrosylated cysteines by ascorbate or by some other reducing agent, in a Cu(2+) or Zn(2+) dependent manner. This free nitric oxide is then capable of cleaving the heparan sulfate side chains. Post-translationally, N- and O-glycosylated. N-glycosylation is mainly of the complex type containing sialic acid. O-glycosylated with heparan sulfate. The heparan sulfate chains can be cleaved either by the action of heparanase or, degraded by a deaminative process that uses nitric oxide (NO) released from the S-nitrosylated cysteines. This process is triggered by ascorbate, or by some other reducing agent, in a Cu(2+)- or Zn(2+) dependent manner. Cu(2+) ions are provided by ceruloproteins such as APP, PRNP or CP which associate with GCP1 in intracellular compartments or lipid rafts. This cell-associated glypican is further processed to give rise to a medium-released species.

It is found in the cell membrane. It localises to the endosome. The protein resides in the secreted. The protein localises to the extracellular space. In terms of biological role, cell surface proteoglycan that bears heparan sulfate. Binds, via the heparan sulfate side chains, alpha-4 (V) collagen and participates in Schwann cell myelination. May act as a catalyst in increasing the rate of conversion of prion protein PRPN(C) to PRNP(Sc) via associating (via the heparan sulfate side chains) with both forms of PRPN, targeting them to lipid rafts and facilitating their interaction. Required for proper skeletal muscle differentiation by sequestering FGF2 in lipid rafts preventing its binding to receptors (FGFRs) and inhibiting the FGF-mediated signaling. Binds Cu(2+) or Zn(2+) ions. This chain is Glypican-1 (Gpc1), found in Mus musculus (Mouse).